A 187-amino-acid chain; its full sequence is MGKQPLAKKAEIVDKVRSLLQASQMVLVIDYKGLTVAEMDQLRAELRKSDSVCMVVKNTLMRRAIADQKAWAGIIPFLAGPTAFILIRGDISAALKAYQDFAKQTKKTEFRGAGIEGLSLTLEQAKAIAELPPKEVLMAQVAGSLKSVATGLAVGLNAVPTQVARGIHEIPASLGRAIRAIADKEAA.

This sequence belongs to the universal ribosomal protein uL10 family. In terms of assembly, part of the ribosomal stalk of the 50S ribosomal subunit. The N-terminus interacts with L11 and the large rRNA to form the base of the stalk. The C-terminus forms an elongated spine to which L12 dimers bind in a sequential fashion forming a multimeric L10(L12)X complex.

Forms part of the ribosomal stalk, playing a central role in the interaction of the ribosome with GTP-bound translation factors. This chain is Large ribosomal subunit protein uL10, found in Synechococcus sp. (strain JA-2-3B'a(2-13)) (Cyanobacteria bacterium Yellowstone B-Prime).